Consider the following 131-residue polypeptide: Peptide methionine sulfoxide reductase MsrB (131 aa).

The 123-residue stretch at 8–130 (LEEWRAMLDP…NSVCLDLVPR (123 aa)) folds into the MsrB domain. Positions 47, 50, 96, and 99 each coordinate Zn(2+). C119 (nucleophile) is an active-site residue.

The protein belongs to the MsrB Met sulfoxide reductase family. The cofactor is Zn(2+).

It catalyses the reaction L-methionyl-[protein] + [thioredoxin]-disulfide + H2O = L-methionyl-(R)-S-oxide-[protein] + [thioredoxin]-dithiol. The chain is Peptide methionine sulfoxide reductase MsrB from Pseudomonas fluorescens (strain Pf0-1).